Here is an 873-residue protein sequence, read N- to C-terminus: Nonsense-mediated mRNA decay factor SMG8 (873 aa).

The segment at 531–604 (AKKMAQREDE…ESMASKTERE (74 aa)) is disordered. The span at 540 to 550 (ELAEEDTDLDI) shows a compositional bias: acidic residues. Low complexity-rich tracts occupy residues 551–562 (PESLLDPDSTSP) and 574–583 (SSSESSSQES). The segment covering 591-604 (SRRDESMASKTERE) has biased composition (basic and acidic residues).

This sequence belongs to the SMG8 family.

Its function is as follows. Involved in nonsense-mediated decay (NMD) of mRNAs containing premature stop codons. Probable component of kinase complex containing smg-1 and recruited to stalled ribosomes. The chain is Nonsense-mediated mRNA decay factor SMG8 (smg-8) from Caenorhabditis elegans.